A 4007-amino-acid polypeptide reads, in one-letter code: PKS-NRPS hybrid synthetase psoA (4007 aa).

In terms of domain architecture, Ketosynthase family 3 (KS3) spans 8–444 (KEPIAIIGTG…GTNCHAIVES (437 aa)). Active-site for beta-ketoacyl synthase activity residues include C182, H321, and H364. The tract at residues 575-897 (VFTGQGAQWA…VLDRKADDIL (323 aa)) is malonyl-CoA:ACP transacylase (MAT) domain. Residues 969-1105 (HPLLGSRTPD…GHIRITLAAE (137 aa)) are N-terminal hotdog fold. A dehydratase (DH) domain region spans residues 969–1147 (HPLLGSRTPD…LSYSGPFRAM (179 aa)). Positions 969–1276 (HPLLGSRTPD…MSSFLPASEK (308 aa)) constitute a PKS/mFAS DH domain. The active-site Proton acceptor; for dehydratase activity is the H1001. Positions 1120 to 1276 (DLLPTSVDRF…MSSFLPASEK (157 aa)) are C-terminal hotdog fold. Catalysis depends on D1179, which acts as the Proton donor; for dehydratase activity. Residues 2131-2305 (TYLLVGLTGH…PASVIDIGMV (175 aa)) form a ketoreductase (KR) domain region. The Carrier 1 domain occupies 2418–2495 (EARKVMENAL…QICDEVVASL (78 aa)). The residue at position 2455 (S2455) is an O-(pantetheine 4'-phosphoryl)serine. Residues 2513 to 2550 (PAHKLRPWDKPSADTKRTDSIAPVPRSQIAANGPNGLP) are disordered. Basic and acidic residues predominate over residues 2518 to 2531 (RPWDKPSADTKRTD). The tract at residues 2589 to 2885 (QPLSLGQSRL…LETIPLWFKV (297 aa)) is condensation (C) domain. The tract at residues 3076-3478 (TYVQLAERAN…LGDVARALVQ (403 aa)) is adenylation (A) domain. The region spanning 3576 to 3652 (TPTEARLRDV…LLAARLDGTS (77 aa)) is the Carrier 2 domain. Position 3612 is an O-(pantetheine 4'-phosphoryl)serine (S3612). A reductase (R) domain region spans residues 3696 to 3920 (LTGATGFLGG…INVETVSNNI (225 aa)).

The protein in the C-terminal section; belongs to the NRP synthetase family.

Its pathway is secondary metabolite biosynthesis. In terms of biological role, PKS-NRPS hybrid synthetase; part of the gene cluster that mediates the biosynthesis of pseurotin A, a competitive inhibitor of chitin synthase and an inducer of nerve-cell proliferation. The PKS-NRPS hybrid synthetase psoA is responsible for the biosynthesis of azaspirene, one of the first intermediates having the 1-oxa-7-azaspiro[4,4]-non-2-ene-4,6-dione core of pseurotin, via condensation of one acetyl-CoA, 4 malonyl-CoA, and a L-phenylalanine molecule. The dual-functional monooxygenase/methyltransferase psoF seems to be involved in the addition of the C3 methyl group onto the pseurotin scaffold. Azaspirene is then converted to synerazol through 4 steps including oxidation of C17 by the cytochrome P450 monooxygenase psoD, O-methylation of the hydroxy group of C8 by the methyltransferase psoC, and the trans-to-cis isomerization of the C13 olefin by the glutathione S-transferase psoE. The fourth step of synerazol production is performed by the dual-functional monooxygenase/methyltransferase psoF which seems to catalyze the epoxidation of the intermediate deepoxy-synerazol. Synerazol can be attacked by a water molecule nonenzymatically at two different positions to yield two diol products, pseurotin A and pseurotin D. This Aspergillus fumigatus (strain ATCC MYA-4609 / CBS 101355 / FGSC A1100 / Af293) (Neosartorya fumigata) protein is PKS-NRPS hybrid synthetase psoA.